Consider the following 237-residue polypeptide: UPF0280 protein Mpal_1292 (237 aa).

Belongs to the UPF0280 family.

The polypeptide is UPF0280 protein Mpal_1292 (Methanosphaerula palustris (strain ATCC BAA-1556 / DSM 19958 / E1-9c)).